The sequence spans 63 residues: Large ribosomal subunit protein uL29 (63 aa).

It belongs to the universal ribosomal protein uL29 family.

This is Large ribosomal subunit protein uL29 from Pseudoalteromonas translucida (strain TAC 125).